The chain runs to 24 residues: Coenzyme PQQ synthesis protein A (24 aa).

Positions 16-20 form a cross-link, pyrroloquinoline quinone (Glu-Tyr); that stretch reads EVTMY.

It belongs to the PqqA family.

The protein operates within cofactor biosynthesis; pyrroloquinoline quinone biosynthesis. Its function is as follows. Required for coenzyme pyrroloquinoline quinone (PQQ) biosynthesis. PQQ is probably formed by cross-linking a specific glutamate to a specific tyrosine residue and excising these residues from the peptide. The polypeptide is Coenzyme PQQ synthesis protein A (Pseudomonas fluorescens (strain Pf0-1)).